The sequence spans 165 residues: Methylated-DNA--protein-cysteine methyltransferase (165 aa).

Cysteine 126 functions as the Nucleophile; methyl group acceptor in the catalytic mechanism.

This sequence belongs to the MGMT family.

It is found in the cytoplasm. The enzyme catalyses a 6-O-methyl-2'-deoxyguanosine in DNA + L-cysteinyl-[protein] = S-methyl-L-cysteinyl-[protein] + a 2'-deoxyguanosine in DNA. The catalysed reaction is a 4-O-methyl-thymidine in DNA + L-cysteinyl-[protein] = a thymidine in DNA + S-methyl-L-cysteinyl-[protein]. Involved in the cellular defense against the biological effects of O6-methylguanine (O6-MeG) and O4-methylthymine (O4-MeT) in DNA. Repairs the methylated nucleobase in DNA by stoichiometrically transferring the methyl group to a cysteine residue in the enzyme. This is a suicide reaction: the enzyme is irreversibly inactivated. In Mycobacterium leprae (strain TN), this protein is Methylated-DNA--protein-cysteine methyltransferase.